Here is a 79-residue protein sequence, read N- to C-terminus: Pulmonary surfactant-associated protein B (79 aa).

The Saposin B-type domain occupies 4-79; it reads PLPFCWLCRT…VCGLVLRCSS (76 aa). 3 disulfides stabilise this stretch: Cys-8-Cys-77, Cys-11-Cys-71, and Cys-35-Cys-46.

As to quaternary structure, homodimer; disulfide-linked.

It is found in the secreted. Its subcellular location is the extracellular space. It localises to the surface film. Its function is as follows. Pulmonary surfactant-associated proteins promote alveolar stability by lowering the surface tension at the air-liquid interface in the peripheral air spaces. SP-B increases the collapse pressure of palmitic acid to nearly 70 millinewtons per meter. This chain is Pulmonary surfactant-associated protein B (SFTPB), found in Sus scrofa (Pig).